Here is a 65-residue protein sequence, read N- to C-terminus: Large ribosomal subunit protein uL29 (65 aa).

This sequence belongs to the universal ribosomal protein uL29 family.

This is Large ribosomal subunit protein uL29 from Acidithiobacillus ferrooxidans (strain ATCC 23270 / DSM 14882 / CIP 104768 / NCIMB 8455) (Ferrobacillus ferrooxidans (strain ATCC 23270)).